The following is a 271-amino-acid chain: Beta-lysine N(6)-acetyltransferase (271 aa).

The tract at residues 86-122 (LRKDRGTGKNQKKKKISRKKDNWKKRKEKSRLPEGYT) is disordered. Positions 95–114 (NQKKKKISRKKDNWKKRKEK) are enriched in basic residues. Residues 121 to 269 (YTLRPAVQAD…GFEDMNIWCR (149 aa)) enclose the N-acetyltransferase domain.

It belongs to the acetyltransferase family.

The catalysed reaction is (3S)-3,6-diaminohexanoate + acetyl-CoA = (3S)-6-acetamido-3-aminohexanoate + CoA + H(+). Catalyzes the acetylation of beta-lysine to N6-acetyl-beta-lysine, a compatible solute produced by methanogenic archaea that helps cells to cope with salt stress. This chain is Beta-lysine N(6)-acetyltransferase, found in Methanosarcina mazei (strain ATCC BAA-159 / DSM 3647 / Goe1 / Go1 / JCM 11833 / OCM 88) (Methanosarcina frisia).